The chain runs to 326 residues: Homocysteine S-methyltransferase 1 (326 aa).

The Hcy-binding domain occupies 9-323 (LLEDLIKKCG…STINAISRDL (315 aa)). Positions 241, 308, and 309 each coordinate Zn(2+).

In terms of assembly, monomer. Zn(2+) is required as a cofactor. Expressed predominantly in roots. Expressed in rosette leaves, cauline leaves and developing seeds.

It catalyses the reaction S-methyl-L-methionine + L-homocysteine = 2 L-methionine + H(+). Strongly inhibited by methionine. Catalyzes methyl transfer from S-methylmethionine (SMM) to adenosyl-L-homocysteine (AdoMet). SMM degradation (by HMT-1, HMT-2 and HMT-3) and biosynthesis (by MMT1) constitute the SMM cycle in plants, which is probably required to achieve short term control of AdoMet level. The protein is Homocysteine S-methyltransferase 1 (HMT-1) of Arabidopsis thaliana (Mouse-ear cress).